We begin with the raw amino-acid sequence, 34 residues long: Photosystem II reaction center protein M (34 aa).

Residues 5-25 form a helical membrane-spanning segment; that stretch reads ILAFSATALLILFPTALLLIL.

Belongs to the PsbM family. In terms of assembly, PSII is composed of 1 copy each of membrane proteins PsbA, PsbB, PsbC, PsbD, PsbE, PsbF, PsbH, PsbI, PsbJ, PsbK, PsbL, PsbM, PsbT, PsbX, PsbY, PsbZ, Psb30/Ycf12, at least 3 peripheral proteins of the oxygen-evolving complex and a large number of cofactors. It forms dimeric complexes.

The protein resides in the plastid membrane. Its function is as follows. One of the components of the core complex of photosystem II (PSII). PSII is a light-driven water:plastoquinone oxidoreductase that uses light energy to abstract electrons from H(2)O, generating O(2) and a proton gradient subsequently used for ATP formation. It consists of a core antenna complex that captures photons, and an electron transfer chain that converts photonic excitation into a charge separation. This subunit is found at the monomer-monomer interface. The chain is Photosystem II reaction center protein M from Cuscuta gronovii (Common dodder).